A 102-amino-acid polypeptide reads, in one-letter code: Small ubiquitin-related modifier 1 (102 aa).

The Ubiquitin-like domain maps to 21 to 98 (DYIKLKVIGQ…IEVYQEQTGG (78 aa)). Gly-98 is covalently cross-linked (Glycyl lysine isopeptide (Gly-Lys) (interchain with K-? in acceptor proteins)). A propeptide spanning residues 99 to 102 (HSTI) is cleaved from the precursor.

It belongs to the ubiquitin family. SUMO subfamily. As to quaternary structure, interacts with sae2, ube2i, ranbp2, pias1 and pias2. Interacts with sox9 and sox10. Covalently attached to a number of proteins. Cleavage of precursor form by a sentrin-specific protease is necessary for function.

It localises to the nucleus membrane. The protein localises to the nucleus speckle. It is found in the cytoplasm. Its subcellular location is the nucleus. The protein resides in the PML body. It localises to the cell membrane. In terms of biological role, ubiquitin-like protein that can be covalently attached to proteins as a monomer or a lysine-linked polymer. Covalent attachment via an isopeptide bond to its substrates requires prior activation by the E1 complex sae1-sae2 and linkage to the E2 enzyme ube2i. This post-translational modification on lysine residues of proteins plays a crucial role in a number of cellular processes such as nuclear transport, DNA replication and repair, mitosis and signal transduction. Polymeric sumo1 chains are also susceptible to polyubiquitination which functions as a signal for proteasomal degradation of modified proteins. This Xenopus tropicalis (Western clawed frog) protein is Small ubiquitin-related modifier 1 (sumo1).